We begin with the raw amino-acid sequence, 738 residues long: 1,4-alpha-glucan branching enzyme GlgB (738 aa).

The active-site Nucleophile is the D399. E452 serves as the catalytic Proton donor.

Belongs to the glycosyl hydrolase 13 family. GlgB subfamily. Monomer.

The enzyme catalyses Transfers a segment of a (1-&gt;4)-alpha-D-glucan chain to a primary hydroxy group in a similar glucan chain.. It functions in the pathway glycan biosynthesis; glycogen biosynthesis. Catalyzes the formation of the alpha-1,6-glucosidic linkages in glycogen by scission of a 1,4-alpha-linked oligosaccharide from growing alpha-1,4-glucan chains and the subsequent attachment of the oligosaccharide to the alpha-1,6 position. This is 1,4-alpha-glucan branching enzyme GlgB from Chlamydia trachomatis serovar L2 (strain ATCC VR-902B / DSM 19102 / 434/Bu).